The following is a 74-amino-acid chain: Toxin BmKaTx17 (74 aa).

Residues 1–8 form the signal peptide; that stretch reads LLMTGVES. The LCN-type CS-alpha/beta domain maps to 10 to 72; it reads RDAYIAKNYN…KPIRIPGKCH (63 aa). Intrachain disulfides connect Cys-20–Cys-71, Cys-24–Cys-44, Cys-30–Cys-54, and Cys-34–Cys-56. Residues 73–74 constitute a propeptide, removed by a carboxypeptidase; it reads RR.

The protein belongs to the long (4 C-C) scorpion toxin superfamily. Sodium channel inhibitor family. Alpha subfamily. In terms of tissue distribution, expressed by the venom gland.

Its subcellular location is the secreted. In terms of biological role, alpha toxins bind voltage-independently at site-3 of sodium channels (Nav) and inhibit the inactivation of the activated channels, thereby blocking neuronal transmission. The sequence is that of Toxin BmKaTx17 from Olivierus martensii (Manchurian scorpion).